The following is a 319-amino-acid chain: Protein MGF 360-8L (319 aa).

It belongs to the asfivirus MGF 360 family.

Plays a role in virus cell tropism, and may be required for efficient virus replication in macrophages. In African swine fever virus (isolate Warthog/Namibia/Wart80/1980) (ASFV), this protein is Protein MGF 360-8L.